A 124-amino-acid polypeptide reads, in one-letter code: MATINQLVRKPRAKQVVKSNVPALEACPQKRGVCTRVYTTTPKKPNSALRKVCRVRLTNGFEVTSYIGGEGHNLQEHSVVLIRGGRVKDLPGVRYHTVRGALDCAGVNDRKQGRSKYGVKRPKS.

Asp-89 carries the post-translational modification 3-methylthioaspartic acid.

The protein belongs to the universal ribosomal protein uS12 family. As to quaternary structure, part of the 30S ribosomal subunit. Contacts proteins S8 and S17. May interact with IF1 in the 30S initiation complex.

In terms of biological role, with S4 and S5 plays an important role in translational accuracy. Interacts with and stabilizes bases of the 16S rRNA that are involved in tRNA selection in the A site and with the mRNA backbone. Located at the interface of the 30S and 50S subunits, it traverses the body of the 30S subunit contacting proteins on the other side and probably holding the rRNA structure together. The combined cluster of proteins S8, S12 and S17 appears to hold together the shoulder and platform of the 30S subunit. This Vibrio campbellii (strain ATCC BAA-1116) protein is Small ribosomal subunit protein uS12.